Reading from the N-terminus, the 573-residue chain is Solute carrier family 41 member 2 (573 aa).

Residues 1 to 162 (MTNSKGRSIT…KESSGIMALQ (162 aa)) are Extracellular-facing. A phosphoserine mark is found at S136 and S137. Residues 163 to 183 (ILVPFLLAGFGTVSAGMVLDI) form a helical membrane-spanning segment. Topologically, residues 184-195 (VQHWEVFRKVTE) are cytoplasmic. Residues 196–216 (VFILVPALLGLKGNLEMTLAS) form a helical membrane-spanning segment. Topologically, residues 217 to 245 (RLSTAVNIGKMDSPIEKWNLIIGNLALKQ) are extracellular. A helical membrane pass occupies residues 246-266 (VQATVVGFLAAVAAIILGWIP). Residues 267 to 282 (EGKYYLDHSILLCSSS) lie on the Cytoplasmic side of the membrane. The helical transmembrane segment at 283–303 (VATAFIASLLQGIIMVGVIVG) threads the bilayer. Topologically, residues 304–313 (SKKTGINPDN) are extracellular. The chain crosses the membrane as a helical span at residues 314 to 334 (VATPIAASFGDLITLAILAWI). Residues 335–347 (SQGLYSCLETYYY) lie on the Cytoplasmic side of the membrane. A helical transmembrane segment spans residues 348–368 (ISPLVGVFFLALTPIWIIIAA). Residues 369–376 (KHPATRTV) are Extracellular-facing. Residues 377-397 (LHSGWEPVITAMVISSIGGLI) form a helical membrane-spanning segment. Residues 398-406 (LDTTVSDPN) lie on the Cytoplasmic side of the membrane. The chain crosses the membrane as a helical span at residues 407–427 (LVGIVVYTPVINGIGGNLVAI). Residues 428-469 (QASRISTYLHLHSIPGELPDEPKGCYYPFRTFFGPGVNNKSA) are Extracellular-facing. A helical membrane pass occupies residues 470 to 490 (QVLLLLVIPGHLIFLYTIHLM). Topologically, residues 491 to 498 (KSGHTSLT) are cytoplasmic. A helical membrane pass occupies residues 499–519 (IIFIVVYLFAAVLQVFTLLWI). Residues 520 to 543 (ADWMVHHFWRKGKDPDSFSIPYLT) lie on the Extracellular side of the membrane. Residues 544-564 (ALGDLLGTALLALSFHFLWLI) form a helical membrane-spanning segment. Residues 565–573 (GDRDGDVGD) lie on the Cytoplasmic side of the membrane.

This sequence belongs to the SLC41A transporter family.

Its subcellular location is the cell membrane. It catalyses the reaction Mg(2+)(in) = Mg(2+)(out). The enzyme catalyses Mn(2+)(in) = Mn(2+)(out). It carries out the reaction Co(2+)(in) = Co(2+)(out). The catalysed reaction is Ni(2+)(in) = Ni(2+)(out). It catalyses the reaction Fe(2+)(in) = Fe(2+)(out). Its function is as follows. Acts as a plasma-membrane magnesium transporter. Can also mediate the transport of other divalent metal cations in an order of Ba(2+) &gt; Ni(2+) &gt; Co(2+) &gt; Fe(2+) &gt; Mn(2+). In Macaca fascicularis (Crab-eating macaque), this protein is Solute carrier family 41 member 2 (SLC41A2).